Consider the following 241-residue polypeptide: Carboxy-S-adenosyl-L-methionine synthase (241 aa).

S-adenosyl-L-methionine-binding positions include Tyr-38, 63-65 (GCS), 88-89 (DN), 116-117 (DI), Asn-131, and Arg-198.

Belongs to the class I-like SAM-binding methyltransferase superfamily. Cx-SAM synthase family. In terms of assembly, homodimer.

The catalysed reaction is prephenate + S-adenosyl-L-methionine = carboxy-S-adenosyl-L-methionine + 3-phenylpyruvate + H2O. Catalyzes the conversion of S-adenosyl-L-methionine (SAM) to carboxy-S-adenosyl-L-methionine (Cx-SAM). This is Carboxy-S-adenosyl-L-methionine synthase from Mannheimia succiniciproducens (strain KCTC 0769BP / MBEL55E).